The chain runs to 443 residues: Probable D-serine dehydratase (443 aa).

K118 bears the N6-(pyridoxal phosphate)lysine mark.

Belongs to the serine/threonine dehydratase family. DsdA subfamily. The cofactor is pyridoxal 5'-phosphate.

It catalyses the reaction D-serine = pyruvate + NH4(+). The protein is Probable D-serine dehydratase of Aeromonas hydrophila subsp. hydrophila (strain ATCC 7966 / DSM 30187 / BCRC 13018 / CCUG 14551 / JCM 1027 / KCTC 2358 / NCIMB 9240 / NCTC 8049).